Here is a 425-residue protein sequence, read N- to C-terminus: Glyco-Gag protein (425 aa).

The Cytoplasmic portion of the chain corresponds to 1–54; sequence MSRASSGTATGARLFGISSVLGEYRVLIGDEGAGPSRSPSEVSFSVWYRSRAAR. The helical transmembrane segment at 55–75 threads the bilayer; that stretch reads LVIVCLVASFLVPCLTFLIAE. Topologically, residues 76-425 are extracellular; sequence TVMGQTITTP…VVQGKEETPA (350 aa). N-linked (GlcNAc...) asparagine; by host glycosylation is present at Asn-137. The interval 174-285 is disordered; sequence VRPFLPPPKP…LREGPNNRPQ (112 aa). A compositionally biased stretch (pro residues) spans 177 to 196; that stretch reads FLPPPKPPTSLPQPLSPQPS. Positions 197–209 are enriched in low complexity; it reads APLTSSLYPVLPK. Composition is skewed to pro residues over residues 213–223 and 233–248; these read PKPPVLPPDPS and EPPP…PSGP.

In terms of processing, glycosylated by host. Cleaved by host near the middle of the molecule, releasing the c-terminal half containing capsid and nucleoprotein domains op GAG.

Its subcellular location is the host cell membrane. In terms of biological role, plays a role in viral particle release. Presumably acts by facilitating the fission of the virion bud at the cell surface. The chain is Glyco-Gag protein from Felidae (cat family).